The following is a 76-amino-acid chain: MNRMLIIFVVVTVFGLASGLGPNMPAPDLAKRNGKGCTCNDGTTTGIFWAGSCPGGWSYCKTMWYWVVPGECCTQK.

A signal peptide spans 1-19 (MNRMLIIFVVVTVFGLASG). The propeptide occupies 20–30 (LGPNMPAPDLA). 3 disulfides stabilise this stretch: Cys-37/Cys-72, Cys-39/Cys-60, and Cys-53/Cys-73.

This sequence belongs to the sea anemone sodium channel inhibitory toxin family. Type I subfamily. Expressed in acontia, a specialised envenomation structure laden with batteries of venom-containing nematocysts found only in the superfamily Metridioidea.

It localises to the secreted. The protein localises to the nematocyst. Its function is as follows. May affect sodium channels (Nav). This Calliactis polypus (Hermit crab anemone) protein is Sea anemone sodium channel inhibitor type I.